Consider the following 156-residue polypeptide: ATP synthase subunit b (156 aa).

The chain crosses the membrane as a helical span at residues 11–31 (AIAFVLFVLFCMKYVWPPLMA).

This sequence belongs to the ATPase B chain family. F-type ATPases have 2 components, F(1) - the catalytic core - and F(0) - the membrane proton channel. F(1) has five subunits: alpha(3), beta(3), gamma(1), delta(1), epsilon(1). F(0) has three main subunits: a(1), b(2) and c(10-14). The alpha and beta chains form an alternating ring which encloses part of the gamma chain. F(1) is attached to F(0) by a central stalk formed by the gamma and epsilon chains, while a peripheral stalk is formed by the delta and b chains.

It localises to the cell inner membrane. Its function is as follows. F(1)F(0) ATP synthase produces ATP from ADP in the presence of a proton or sodium gradient. F-type ATPases consist of two structural domains, F(1) containing the extramembraneous catalytic core and F(0) containing the membrane proton channel, linked together by a central stalk and a peripheral stalk. During catalysis, ATP synthesis in the catalytic domain of F(1) is coupled via a rotary mechanism of the central stalk subunits to proton translocation. In terms of biological role, component of the F(0) channel, it forms part of the peripheral stalk, linking F(1) to F(0). This chain is ATP synthase subunit b, found in Sodalis glossinidius (strain morsitans).